The chain runs to 88 residues: Small ribosomal subunit protein uS15 (88 aa).

This sequence belongs to the universal ribosomal protein uS15 family. In terms of assembly, part of the 30S ribosomal subunit. Forms a bridge to the 50S subunit in the 70S ribosome, contacting the 23S rRNA.

One of the primary rRNA binding proteins, it binds directly to 16S rRNA where it helps nucleate assembly of the platform of the 30S subunit by binding and bridging several RNA helices of the 16S rRNA. Functionally, forms an intersubunit bridge (bridge B4) with the 23S rRNA of the 50S subunit in the ribosome. The protein is Small ribosomal subunit protein uS15 of Francisella tularensis subsp. holarctica (strain LVS).